The chain runs to 502 residues: N-fatty-acyl-amino acid synthase/hydrolase PM20D1 (502 aa).

The N-terminal stretch at 1 to 25 (MAQRCVCVLALVAMLLLVFPTVSRS) is a signal peptide. Residue His125 coordinates Zn(2+). The active site involves Asp127. Asp157 is a binding site for Zn(2+). The active-site Proton acceptor is the Glu191. Positions 192 and 217 each coordinate Zn(2+). An N-linked (GlcNAc...) asparagine glycan is attached at Asn252. His464 is a binding site for Zn(2+).

The protein belongs to the peptidase M20A family. Requires Zn(2+) as cofactor.

It localises to the secreted. It catalyses the reaction an N-acyl-L-amino acid + H2O = an L-alpha-amino acid + a carboxylate. It carries out the reaction an N-acyl-aromatic L-alpha-amino acid + H2O = an aromatic L-alpha-amino acid + a carboxylate. The enzyme catalyses L-phenylalanine + (9Z)-octadecenoate = N-(9Z-octadecenoyl)-L-phenylalanine + H2O. The catalysed reaction is N-(9Z-octadecenoyl)-L-leucine + H2O = L-leucine + (9Z)-octadecenoate. It catalyses the reaction N-(5Z,8Z,11Z,14Z)-eicosatetraenoyl-glycine + H2O = (5Z,8Z,11Z,14Z)-eicosatetraenoate + glycine. It carries out the reaction N-hexadecanoyl-L-phenylalanine + H2O = hexadecanoate + L-phenylalanine. The enzyme catalyses N-octadecanoyl-L-phenylalanine + H2O = octadecanoate + L-phenylalanine. The catalysed reaction is N-(4Z,7Z,10Z,13Z,16Z,19Z-docosahexaenoyl)-L-phenylalanine + H2O = (4Z,7Z,10Z,13Z,16Z,19Z)-docosahexaenoate + L-phenylalanine. It catalyses the reaction N-(9Z-octadecenoyl)-L-asparagine + H2O = L-asparagine + (9Z)-octadecenoate. It carries out the reaction (9Z)-octadecenoate + glycine = N-(9Z-octadecenoyl)glycine + H2O. The enzyme catalyses N-(9Z-octadecenoyl)-L-lysine + H2O = L-lysine + (9Z)-octadecenoate. The catalysed reaction is N-(9Z-octadecenoyl)-L-methionine + H2O = (9Z)-octadecenoate + L-methionine. It catalyses the reaction N-(9Z-octadecenoyl)-L-serine + H2O = L-serine + (9Z)-octadecenoate. It carries out the reaction N-(9Z-octadecenoyl)-L-tryptophan + H2O = L-tryptophan + (9Z)-octadecenoate. The enzyme catalyses N-(9Z-octadecenoyl)-L-tyrosine + H2O = L-tyrosine + (9Z)-octadecenoate. The catalysed reaction is N-(9Z-octadecenoyl)-L-glutamine + H2O = L-glutamine + (9Z)-octadecenoate. It catalyses the reaction N-(5Z,8Z,11Z,14Z-eicosatetraenoyl)-L-serine + H2O = (5Z,8Z,11Z,14Z)-eicosatetraenoate + L-serine. It carries out the reaction (5Z,8Z,11Z,14Z)-eicosatetraenoate + L-phenylalanine = N-(5Z,8Z,11Z,14Z-eicosatetraenoyl)-L-phenylalanine + H2O. It functions in the pathway amino-acid metabolism. It participates in energy metabolism. The protein operates within lipid metabolism; fatty acid metabolism. With respect to regulation, lipoproteins are powerful coactivators of PM20D1 activity in vitro and NAA biosynthesis in vivo. Secreted enzyme that regulates the endogenous N-fatty acyl amino acid (NAAs) tissue and circulating levels by functioning as a bidirectional NAA synthase/hydrolase. It condenses free fatty acids and free amino acids to generate NAAs and bidirectionally catalyzes the reverse hydrolysis reaction. Some of these NAAs stimulate oxidative metabolism via mitochondrial uncoupling, increasing energy expenditure in a UPC1-independent manner. Thereby, this secreted protein may indirectly regulate whole body energy expenditure. PM20D1 circulates in tight association with both low- and high-density (LDL and HDL,respectively) lipoprotein particles. The sequence is that of N-fatty-acyl-amino acid synthase/hydrolase PM20D1 from Homo sapiens (Human).